The sequence spans 2429 residues: Reducing polyketide synthase ppsB (2429 aa).

In terms of domain architecture, Ketosynthase family 3 (KS3) spans 4 to 442 (DERVAIIGTG…GTNAHAILES (439 aa)). Active-site for beta-ketoacyl synthase activity residues include Cys177, His317, and His362. The tract at residues 558 to 873 (VFTGQGAQWP…PYIGLAHRGE (316 aa)) is malonyl-CoA:ACP transacylase (MAT) domain. The active-site For acyl/malonyl transferase activity is the Ser652. Positions 945 to 1075 (HPLLGVLSSE…GRVILALGEA (131 aa)) are N-terminal hotdog fold. Residues 945 to 1227 (HPLLGVLSSE…QLEGIHLTLS (283 aa)) form a product template (PT) domain region. The 289-residue stretch at 945 to 1233 (HPLLGVLSSE…LTLSKPKNSS (289 aa)) folds into the PKS/mFAS DH domain. The tract at residues 1090 to 1233 (SYPMNVDKFY…LTLSKPKNSS (144 aa)) is C-terminal hotdog fold. The methyltransferase (CMeT) domain stretch occupies residues 1409-2158 (LEVGAGTGSA…ISDLYDQLTS (750 aa)). A Carrier domain is found at 2350-2425 (EIILQLFKEK…SMVDEVVKRR (76 aa)). The residue at position 2385 (Ser2385) is an O-(pantetheine 4'-phosphoryl)serine.

The protein operates within secondary metabolite biosynthesis. Its function is as follows. Reducing polyketide synthase; part of the gene cluster that mediates the biosynthesis of 2,4'-dihydroxy-3'-methoxypropiophenone. The first step of the pathway is the conversion of acetate into acetyl-CoA by the acyl-CoA ligase ppsA. Acetyl-CoA is then used as a starter unit by the polyketide synthase ppsB and condensed with 4 malonyl-CoA unit to produce the pentaketide backbone. During polyketide extension, the polykedite chain is probably reduced and dehydrated by the KR and PT domains, respectively. O-methylation seems to be catalyzed by an unknown methyltransferase rather than by the CMeT domain of ppsB. Two hydroxylations and one further decarboxylation step catalyzed by yet unknown enzymes are then required to yield 4'-hydroxy-3'-methoxypropiophenone. PpsC functions as a carrier protein to transport 4'-hydroxy-3'-methoxypropiophenone to a specific cell compartment in which 4'-hydroxy-3'-methoxypropiophenone is hydroxylated to 2,4'-dihydroxy-3'-methoxypropiophenone by a still to be identified enzyme. In Aspergillus oryzae (strain ATCC 42149 / RIB 40) (Yellow koji mold), this protein is Reducing polyketide synthase ppsB.